The following is a 934-amino-acid chain: MPHRAASPAMSENEFDITGALFQNDSDSDNEQPSAKSKRQPPKKVPSQALDFLGDVNEDDDDDEAFIAEQQTSANRKASNLKGRTVKKGGGFQAMGLSANLLKAIARKGFSVPTPIQRKTIPVIMDDQDVVGMARTGSGKTAAFVIPMIEKLKSHSTKVGARGLILSPSRELALQTLKVVKELGRGTDLKSVLLVGGDSLEEQFAMMAGNPDIVIATPGRFLHLKVEMNLDLSSIRYVVFDEADRLFEMGFAAQLTEILHGLPANRQTLLFSATLPKSLVEFARAGLQEPTLVRLDTESKISPDLQNAFFSVKSSEKEGALLYILQEVIKMPTGPTEVSQQRKEEDASAKNWKNKKRKRAEMEKAVNMRESPTKHSTIVFAATKHHVDYLYSLLSEAGFAVSYVYGSLDQTARKIQVQNFRTGMTNILVVTDVAARGIDIPILANVINYDFPSQPKIFIHRVGRTARAGRKGWSYSLVRDADAPYLLDLQLFLGRRLVVGREFGDQVNFAEDVVTGSLPRDGLSQSCEWVTKVLDDNADLAAQRTVAAKGEKLYMRTRNSASLESAKRSKQVVSSDNWTSIHPLFQDETSNLEAEREKMLARIGGYRPPETIFEVNNRRMGKHENVDALDTIKRVRTTLESKKKRAQANEKSEFLEDASDDEKAANEAGENENEGAFSDEDDDVPTGVADNMSMASDSELEVTFSSYSQSKENKAKKASAASFQNPEYFMSYTPNNNSLVEDRAYGVHSGTNSNFAQASRSATMDLAGDDGGRGFGEARTLMRWDKRHKKYVARQNDEDGSKGTRLVRGESGAKIAASFRSGRFDAWKRGNRLGRLPRVGEAEAPNLTAGLNAAISGKRFRHRKEQAPKRADPLRGDYEKMKKKAELAKERAMSKAGGAAPRGKSELKNTDDIRIARKLKQKRREKNARPSRKK.

The tract at residues 1-57 (MPHRAASPAMSENEFDITGALFQNDSDSDNEQPSAKSKRQPPKKVPSQALDFLGDVN) is disordered. Residues 21–35 (LFQNDSDSDNEQPSA) are compositionally biased toward polar residues. The Q motif motif lies at 90-118 (GGFQAMGLSANLLKAIARKGFSVPTPIQR). Residues 121-293 (IPVIMDDQDV…RAGLQEPTLV (173 aa)) form the Helicase ATP-binding domain. 134 to 141 (ARTGSGKT) serves as a coordination point for ATP. Residues 241-244 (DEAD) carry the DEAD box motif. The tract at residues 334-358 (GPTEVSQQRKEEDASAKNWKNKKRK) is disordered. The Helicase C-terminal domain occupies 361–515 (EMEKAVNMRE…QVNFAEDVVT (155 aa)). Residues 639-654 (LESKKKRAQANEKSEF) are compositionally biased toward basic and acidic residues. Disordered regions lie at residues 639 to 688 (LESK…PTGV) and 854 to 934 (AISG…SRKK). The span at 669-684 (GENENEGAFSDEDDDV) shows a compositional bias: acidic residues. Composition is skewed to basic and acidic residues over residues 865-893 (EQAP…ERAM) and 903-915 (GKSE…DIRI). The segment covering 916-934 (ARKLKQKRREKNARPSRKK) has biased composition (basic residues).

The protein belongs to the DEAD box helicase family. DDX54/DBP10 subfamily.

Its subcellular location is the nucleus. The protein localises to the nucleolus. The enzyme catalyses ATP + H2O = ADP + phosphate + H(+). In terms of biological role, ATP-binding RNA helicase involved in the biogenesis of 60S ribosomal subunits and is required for the normal formation of 25S and 5.8S rRNAs. The protein is ATP-dependent RNA helicase dbp10 (dbp10) of Neosartorya fischeri (strain ATCC 1020 / DSM 3700 / CBS 544.65 / FGSC A1164 / JCM 1740 / NRRL 181 / WB 181) (Aspergillus fischerianus).